Here is a 301-residue protein sequence, read N- to C-terminus: Mas-related G-protein coupled receptor member A6 (301 aa).

The Extracellular segment spans residues 1–15 (MHRSISIRILITNLM). Residues 16-36 (IVILGLVGLTGNAIVFWLLLF) form a helical membrane-spanning segment. Topologically, residues 37–42 (RLRRNA) are cytoplasmic. Residues 43–63 (FSIYILNLALADFLFLLCHII) form a helical membrane-spanning segment. The Extracellular segment spans residues 64–77 (ASTEHILTFSSPNS). Residues 78–98 (IFINCLYTFRVLLYIAGLNML) traverse the membrane as a helical segment. At 99 to 128 (SAISIERCLSVMCPIWYRCHRPEHTSTVMC) the chain is on the cytoplasmic side. Residues 129–149 (AMIWVLSLLLCILYRYFCGFL) traverse the membrane as a helical segment. Residues 150 to 163 (DTKYEDDYGCLAMN) lie on the Extracellular side of the membrane. Residues 164 to 184 (FLTTAYLMFLFVVLCVSSLAL) traverse the membrane as a helical segment. Topologically, residues 185–203 (LARLFCGAGRMKLTRLYVT) are cytoplasmic. A helical membrane pass occupies residues 204–224 (ITLTLLVFLLCGLPCGFYWFL). At 225–240 (LSKIKNVFSVFEFSLY) the chain is on the extracellular side. A helical transmembrane segment spans residues 241–261 (LTSVVLTAINSCANPIIYFFV). Over 262–301 (GSFRHRLKHQTLKMVLQSALQDTPETPENMVEMSRNKAEL) the chain is Cytoplasmic.

It belongs to the G-protein coupled receptor 1 family. Mas subfamily. In terms of tissue distribution, expressed in a subset of sensory neurons that includes nociceptors. Expressed in the subclass of non-peptidergic sensory neurons that are IB4(+) and VR1(-).

The protein resides in the cell membrane. In terms of biological role, orphan receptor. May be a receptor for RFamide-family neuropeptides such as NPFF and NPAF, which are analgesic in vivo. May regulate nociceptor function and/or development, including the sensation or modulation of pain. In Mus musculus (Mouse), this protein is Mas-related G-protein coupled receptor member A6 (Mrgpra6).